The chain runs to 371 residues: Vasopressin V2 receptor (371 aa).

Residues 1–38 (MLLVSTVSAVPGLFSPPSSPSNSSQEELLDDRDPLLVR) lie on the Extracellular side of the membrane. Residue asparagine 22 is glycosylated (N-linked (GlcNAc...) asparagine). A helical membrane pass occupies residues 39–63 (AELALLSTIFVAVALSNGLVLGALI). Residues 64–77 (RRGRRGRWAPMHVF) are Cytoplasmic-facing. A helical membrane pass occupies residues 78–98 (ISHLCLADLAVALFQVLPQLA). Residues 99–113 (WDATDRFHGPDALCR) lie on the Extracellular side of the membrane. Residues 114-135 (AVKYLQMVGMYASSYMILAMTL) form a helical membrane-spanning segment. The Cytoplasmic segment spans residues 136–159 (DRHRAICRPMLAYRHGGGARWNRP). The chain crosses the membrane as a helical span at residues 160–180 (VLVAWAFSLLLSLPQLFIFAQ). Over 181 to 200 (RDVGNGSGVFDCWARFAEPW) the chain is Extracellular. The N-linked (GlcNAc...) asparagine glycan is linked to asparagine 185. The chain crosses the membrane as a helical span at residues 201–220 (GLRAYVTWIALMVFVAPALG). The Cytoplasmic segment spans residues 221-271 (IAACQVLIFREIHASLVPGPSERAGRRRRGRRTGSPSEGAHVSAAMAKTVR). The disordered stretch occupies residues 240 to 260 (PSERAGRRRRGRRTGSPSEGA). The helical transmembrane segment at 272–293 (MTLVIVIVYVLCWAPFFLVQLW) threads the bilayer. Residues 294–308 (AAWDPEAPLERPPFV) lie on the Extracellular side of the membrane. Residues 309–328 (LLMLLASLNSCTNPWIYASF) traverse the membrane as a helical segment. Residues 329-371 (SSSVSSELRSLLCCAQRHTTHSLGPQDESCATASSSLMKDTPS) lie on the Cytoplasmic side of the membrane. Residues cysteine 341 and cysteine 342 are each lipidated (S-palmitoyl cysteine). Residues 349–371 (HSLGPQDESCATASSSLMKDTPS) form a disordered region. Positions 357–371 (SCATASSSLMKDTPS) are enriched in polar residues.

Belongs to the G-protein coupled receptor 1 family. Vasopressin/oxytocin receptor subfamily. Interacts with ARRDC4. Identified in a complex containing at least ARRDC4, V2R and HGS. Interacts with TMEM147. As to expression, kidney.

The protein resides in the cell membrane. Functionally, receptor for arginine vasopressin. The activity of this receptor is mediated by G proteins which activate adenylate cyclase. Involved in renal water reabsorption. In Rattus norvegicus (Rat), this protein is Vasopressin V2 receptor (Avpr2).